The sequence spans 524 residues: Probable glycine dehydrogenase (decarboxylating) subunit 2 (524 aa).

At Lys296 the chain carries N6-(pyridoxal phosphate)lysine.

The protein belongs to the GcvP family. C-terminal subunit subfamily. The glycine cleavage system is composed of four proteins: P, T, L and H. In this organism, the P 'protein' is a heterodimer of two subunits. Requires pyridoxal 5'-phosphate as cofactor.

The enzyme catalyses N(6)-[(R)-lipoyl]-L-lysyl-[glycine-cleavage complex H protein] + glycine + H(+) = N(6)-[(R)-S(8)-aminomethyldihydrolipoyl]-L-lysyl-[glycine-cleavage complex H protein] + CO2. The glycine cleavage system catalyzes the degradation of glycine. The P protein binds the alpha-amino group of glycine through its pyridoxal phosphate cofactor; CO(2) is released and the remaining methylamine moiety is then transferred to the lipoamide cofactor of the H protein. In Caulobacter vibrioides (strain ATCC 19089 / CIP 103742 / CB 15) (Caulobacter crescentus), this protein is Probable glycine dehydrogenase (decarboxylating) subunit 2.